The sequence spans 329 residues: Probable cell division protein WhiA (329 aa).

Positions 275–308 (SLEELGALADPPLTKDAVAGRIRRLLAMADKRAQ) form a DNA-binding region, H-T-H motif.

This sequence belongs to the WhiA family.

Its function is as follows. Involved in cell division and chromosome segregation. The chain is Probable cell division protein WhiA from Streptomyces avermitilis (strain ATCC 31267 / DSM 46492 / JCM 5070 / NBRC 14893 / NCIMB 12804 / NRRL 8165 / MA-4680).